We begin with the raw amino-acid sequence, 263 residues long: Peptide methionine sulfoxide reductase A4, chloroplastic (263 aa).

Residues 1-75 (MPPLLASTSS…GLGGLGGSPR (75 aa)) constitute a chloroplast transit peptide.

The protein belongs to the MsrA Met sulfoxide reductase family. In terms of tissue distribution, expressed in roots, stems, leaves and flowers.

It is found in the plastid. It localises to the chloroplast. It carries out the reaction L-methionyl-[protein] + [thioredoxin]-disulfide + H2O = L-methionyl-(S)-S-oxide-[protein] + [thioredoxin]-dithiol. The catalysed reaction is [thioredoxin]-disulfide + L-methionine + H2O = L-methionine (S)-S-oxide + [thioredoxin]-dithiol. Functionally, catalyzes the reduction of methionine sulfoxide (MetSO) to methionine in proteins. Involved in abiotic and salt stress responses. Plays a protective role against oxidative stress by restoring activity to proteins that have been inactivated by methionine oxidation. MSRA family specifically reduces the MetSO S-enantiomer. This Oryza sativa subsp. japonica (Rice) protein is Peptide methionine sulfoxide reductase A4, chloroplastic.